A 1010-amino-acid polypeptide reads, in one-letter code: Outer kinetochore KNL1 complex subunit knl-1 (1010 aa).

Tandem repeats lie at residues 85-88, 109-112, 228-231, 255-258, 278-281, 323-326, 346-349, 402-405, and 428-431. The 9 X 4 AA repeats of M-[D/E]-[I/L/M]-[S/T] stretch occupies residues 85 to 431; that stretch reads MDISESPACT…LQKEDLMDIS (347 aa). Coiled coils occupy residues 820–915 and 956–988; these read RIVE…GLDK and KALR…KFAQ.

As to quaternary structure, component of the KNL1 complex composed of knl-1 and kbp-5. Part of the ten-subunit outer kinetochore KMN network that includes the KNL1, MIS12 and NDC80 complexes. Interacts with the protein phosphatase 1 (PP1) catalytic subunit gsp-1; the interaction is direct. Interacts with the protein phosphatase 1 (PP1) catalytic subunit gsp-2; the interaction is direct. Interacts with the MIS12 complex subunits kbp-1, kbp-2 and mis-12. Interacts with the NDC80 complex components ndc-80 and him-10. Interacts with knl-3. Interacts with kbp-3. Interacts with kbp-4. Interacts with kbp-5.

The protein localises to the cytoplasm. Its subcellular location is the cell cortex. It localises to the chromosome. The protein resides in the centromere. It is found in the kinetochore. In terms of biological role, acts as a component of the outer kinetochore KNL1 complex that serves as a docking point for spindle assembly checkpoint components and mediates microtubule-kinetochore interactions. Kinetochores, consisting of a centromere-associated inner segment and a microtubule-contacting outer segment, play a crucial role in chromosome segregation by mediating the physical connection between centromeric DNA and spindle microtubules. The outer kinetochore is made up of the ten-subunit KMN network, comprising the MIS12, NDC80 and KNL1 complexes, and auxiliary microtubule-associated components; together they connect the outer kinetochore with the inner kinetochore, bind microtubules, and mediate interactions with mitotic checkpoint proteins that delay anaphase until chromosomes are bioriented on the spindle. Binds the protein phosphatase 1 catalytic subunits gsp-1 and gsp-2, which has a role in delaying formation of load-bearing kinetochore-microtubule attachments. Required for the recruitment of spindle-assembly checkpoint components bub-1 and mdf-1/2 to unattached kinetochores. Binds microtubules which plays a role in silencing of the spindle assembly checkpoint, but not the formation of load-bearing microtubule-kinetochore attachments. Has a role in the correct localization of the spindly-like protein spdl-1 and the RZZ complex that is composed of rod-1, czw-1 and zwl-1 to kinetochores. This Caenorhabditis elegans protein is Outer kinetochore KNL1 complex subunit knl-1 (knl-1).